Here is a 421-residue protein sequence, read N- to C-terminus: Gamma-glutamyl phosphate reductase (421 aa).

It belongs to the gamma-glutamyl phosphate reductase family.

It localises to the cytoplasm. The enzyme catalyses L-glutamate 5-semialdehyde + phosphate + NADP(+) = L-glutamyl 5-phosphate + NADPH + H(+). Its pathway is amino-acid biosynthesis; L-proline biosynthesis; L-glutamate 5-semialdehyde from L-glutamate: step 2/2. Functionally, catalyzes the NADPH-dependent reduction of L-glutamate 5-phosphate into L-glutamate 5-semialdehyde and phosphate. The product spontaneously undergoes cyclization to form 1-pyrroline-5-carboxylate. The sequence is that of Gamma-glutamyl phosphate reductase from Dinoroseobacter shibae (strain DSM 16493 / NCIMB 14021 / DFL 12).